A 294-amino-acid chain; its full sequence is Diphthine synthase (294 aa).

S-adenosyl-L-methionine contacts are provided by residues aspartate 93, valine 96, serine 121–glycine 122, leucine 173, and alanine 220.

Belongs to the diphthine synthase family. Homodimer.

The catalysed reaction is 2-[(3S)-amino-3-carboxypropyl]-L-histidyl-[translation elongation factor 2] + 3 S-adenosyl-L-methionine = diphthine-[translation elongation factor 2] + 3 S-adenosyl-L-homocysteine + 3 H(+). It functions in the pathway protein modification; peptidyl-diphthamide biosynthesis. Its function is as follows. S-adenosyl-L-methionine-dependent methyltransferase that catalyzes the trimethylation of the amino group of the modified target histidine residue in translation elongation factor 2 (EF-2), to form an intermediate called diphthine. The three successive methylation reactions represent the second step of diphthamide biosynthesis. The protein is Diphthine synthase (dphB) of Aeropyrum pernix (strain ATCC 700893 / DSM 11879 / JCM 9820 / NBRC 100138 / K1).